A 172-amino-acid chain; its full sequence is MEYFNVGKIVNTQGLQGEMRVLSVSDFTEERFQKGARLALFDDKDRFVQEVEIASHRKHKQFDIIKFKGMYHINAIEQFKGCSLKIAKEHQGKLAEGEFYYHQIIGLEVYEKDQLVGQIKEILQPGANDVWVVKRQSKRDLLLPYIPSVVLGVDIEKGRVDVEIMEGLDDED.

A PRC barrel domain is found at 95 to 168 (AEGEFYYHQI…RVDVEIMEGL (74 aa)).

The protein belongs to the RimM family. As to quaternary structure, binds ribosomal protein uS19.

It is found in the cytoplasm. Its function is as follows. An accessory protein needed during the final step in the assembly of 30S ribosomal subunit, possibly for assembly of the head region. Essential for efficient processing of 16S rRNA. May be needed both before and after RbfA during the maturation of 16S rRNA. It has affinity for free ribosomal 30S subunits but not for 70S ribosomes. In Streptococcus equi subsp. zooepidemicus (strain H70), this protein is Ribosome maturation factor RimM.